Consider the following 146-residue polypeptide: 1,4-dihydroxy-2-naphthoyl-CoA hydrolase (146 aa).

D19 is an active-site residue.

Belongs to the 4-hydroxybenzoyl-CoA thioesterase family. DHNA-CoA hydrolase subfamily.

It catalyses the reaction 1,4-dihydroxy-2-naphthoyl-CoA + H2O = 1,4-dihydroxy-2-naphthoate + CoA + H(+). Its pathway is cofactor biosynthesis; phylloquinone biosynthesis. The protein operates within quinol/quinone metabolism; 1,4-dihydroxy-2-naphthoate biosynthesis; 1,4-dihydroxy-2-naphthoate from chorismate: step 7/7. In terms of biological role, catalyzes the hydrolysis of 1,4-dihydroxy-2-naphthoyl-CoA (DHNA-CoA) to 1,4-dihydroxy-2-naphthoate (DHNA), a reaction involved in phylloquinone (vitamin K1) biosynthesis. The sequence is that of 1,4-dihydroxy-2-naphthoyl-CoA hydrolase from Thermosynechococcus vestitus (strain NIES-2133 / IAM M-273 / BP-1).